Consider the following 248-residue polypeptide: Probable phosphatase VPA0505 (248 aa).

Residues His-8, His-10, His-16, His-41, Glu-74, His-102, His-132, Asp-194, and His-196 each contribute to the Zn(2+) site.

It belongs to the PHP family. Requires Zn(2+) as cofactor.

This chain is Probable phosphatase VPA0505, found in Vibrio parahaemolyticus serotype O3:K6 (strain RIMD 2210633).